The chain runs to 221 residues: DELTA-actitoxin-Ucs1a (221 aa).

Positions M1–A19 are cleaved as a signal peptide. Residues L20 to K42 constitute a propeptide that is removed on maturation. A plays an important role in the hemolytic activity region spans residues A45 to A54. The N-terminal region stretch occupies residues G53–N72. S96, V129, S147, P149, Y175, Y179, and Y180 together coordinate phosphocholine. Residues S147–K162 form a trp-rich region, which is important for the binding to lipid membrane region. The Cell attachment site, crucial for protein stability motif lies at K186 to D188.

The protein belongs to the actinoporin family. Sea anemone subfamily. Octamer or nonamer in membranes. Monomer in the soluble state.

The protein localises to the secreted. The protein resides in the nematocyst. It localises to the target cell membrane. Its function is as follows. Pore-forming protein that forms cations-selective hydrophilic pores of around 1 nm and causes cytolysis. Pore formation is a multi-step process that involves specific recognition of membrane sphingomyelin (but neither cholesterol nor phosphatidylcholine) using aromatic rich region and adjacent phosphocholine (POC) binding site, firm binding to the membrane (mainly driven by hydrophobic interactions) accompanied by the transfer of the N-terminal region to the lipid-water interface and finally pore formation after oligomerization of monomers. The sequence is that of DELTA-actitoxin-Ucs1a from Urticina crassicornis (Mottled anemone).